The sequence spans 255 residues: Protein DOG1-like 2 (255 aa).

The DOG1 domain maps to 10–246 (EKLQKRCYHE…HDRGRVRADV (237 aa)).

This is Protein DOG1-like 2 from Arabidopsis thaliana (Mouse-ear cress).